A 154-amino-acid polypeptide reads, in one-letter code: RxLR effector protein PITG_12737 (154 aa).

Positions 1–16 (MRVYFILILAVATVSG) are cleaved as a signal peptide. A RxLR-dEER motif is present at residues 42-58 (RLLRAELTTDETYPEER).

The protein belongs to the RxLR effector family.

It is found in the secreted. Its subcellular location is the host nucleus. It localises to the host cytoplasm. Functionally, effector that enhances P.infestans colonization of Nicotiana benthamiana leaves. The chain is RxLR effector protein PITG_12737 from Phytophthora infestans (strain T30-4) (Potato late blight agent).